The chain runs to 1047 residues: Exportin-6 (1047 aa).

The region spanning 32 to 98 is the Importin N-terminal domain; the sequence is IDTILNNYKA…KGLLLDIYLN (67 aa).

The protein belongs to the exportin family.

The protein localises to the nucleus. It localises to the cytoplasm. Probably mediates the nuclear export of actin and profilin-actin complexes. In Dictyostelium discoideum (Social amoeba), this protein is Exportin-6 (xpo6).